The sequence spans 87 residues: Toxin Css39.8 (87 aa).

The N-terminal stretch at 1-19 is a signal peptide; it reads MNSLLMITACFFLIGTVWA. An LCN-type CS-alpha/beta domain is found at 20–85; that stretch reads KEGYLVNKST…TYPLPNKSCS (66 aa). 4 cysteine pairs are disulfide-bonded: C31–C84, C35–C60, C44–C65, and C48–C67.

The protein belongs to the long (4 C-C) scorpion toxin superfamily. Sodium channel inhibitor family. Beta subfamily. As to expression, expressed by the venom gland.

It is found in the secreted. Its function is as follows. Beta toxins bind voltage-independently at site-4 of sodium channels (Nav) and shift the voltage of activation toward more negative potentials thereby affecting sodium channel activation and promoting spontaneous and repetitive firing. This toxin is lethal to crustaceans (freshwater crayfish (Cambarellus montezumae spp.)), it provokes a reversible paralysis to insects (crickets (Achaeta spp.)), but is not toxic to mice. At high concentrations, it does displace the (beta) mammal-specific toxin Cn2 from rat brain synaptosomes. The protein is Toxin Css39.8 of Centruroides suffusus (Durango bark scorpion).